The primary structure comprises 124 residues: Large ribosomal subunit protein bL20 (124 aa).

It belongs to the bacterial ribosomal protein bL20 family.

Its function is as follows. Binds directly to 23S ribosomal RNA and is necessary for the in vitro assembly process of the 50S ribosomal subunit. It is not involved in the protein synthesizing functions of that subunit. The protein is Large ribosomal subunit protein bL20 (rplT) of Mycoplasma genitalium (strain ATCC 33530 / DSM 19775 / NCTC 10195 / G37) (Mycoplasmoides genitalium).